We begin with the raw amino-acid sequence, 236 residues long: uncharacterized protein (236 aa).

The NADP(+) site is built by Asp-22, Asn-49, and Lys-82. Active-site proton donor residues include Ser-100 and Tyr-114. NADP(+) is bound by residues Tyr-114 and Lys-118. The active-site Lowers pKa of active site Tyr is the Lys-118.

This sequence belongs to the short-chain dehydrogenases/reductases (SDR) family.

Its subcellular location is the cytoplasm. It is found in the nucleus. This is an uncharacterized protein from Schizosaccharomyces pombe (strain 972 / ATCC 24843) (Fission yeast).